The chain runs to 160 residues: MIELDLQCASTGAAPAAADLQRWCELALRQRSGDSELTIRLVDEEEGRELNRTWRQKDYATNVLSFPADVPDEFLDIPLLGDLVICVPVVEREAAEQGKTLDAHWAHLVIHGCLHLLGYDHIEDAEAEEMEALERQLLAELGHPDPYAEDSPETGICKDS.

His-111, His-115, and His-121 together coordinate Zn(2+).

The protein belongs to the endoribonuclease YbeY family. Requires Zn(2+) as cofactor.

Its subcellular location is the cytoplasm. Single strand-specific metallo-endoribonuclease involved in late-stage 70S ribosome quality control and in maturation of the 3' terminus of the 16S rRNA. This Stutzerimonas stutzeri (strain A1501) (Pseudomonas stutzeri) protein is Endoribonuclease YbeY.